Reading from the N-terminus, the 410-residue chain is Regulator of microtubule dynamics protein 2 (410 aa).

A helical membrane pass occupies residues 9-28 (LILGIMVGTAGISLLLLWYH). Ser51 bears the Phosphoserine mark. The stretch at 68–110 (FQERQLQILEKLNELLTNMEELKEEIRFLKEAIPKLEEYIQDE) forms a coiled coil. Ser121 is modified (phosphoserine). Over residues 122-131 (PQHRARKRRL) the composition is skewed to basic residues. The interval 122–164 (PQHRARKRRLPTIQSSATSNSSEEAESEGGYITANTDTEEQSF) is disordered. Thr139 carries the phosphothreonine modification. Residue Tyr152 is modified to Phosphotyrosine. 2 positions are modified to phosphothreonine: Thr154 and Thr157.

This sequence belongs to the RMDN family. As to quaternary structure, interacts with microtubules.

The protein localises to the membrane. It is found in the cytoplasm. It localises to the cytoskeleton. Its subcellular location is the spindle. The protein resides in the spindle pole. The protein is Regulator of microtubule dynamics protein 2 (RMDN2) of Homo sapiens (Human).